The following is a 699-amino-acid chain: tRNA wybutosine-synthesizing protein 4 (699 aa).

S-adenosyl-L-methionine contacts are provided by residues arginine 94, glycine 120, aspartate 151, 197 to 198, and glutamate 224; that span reads DL.

This sequence belongs to the methyltransferase superfamily. LCMT family.

The enzyme catalyses 7-[(3S)-3-amino-3-carboxypropyl]wyosine(37) in tRNA(Phe) + S-adenosyl-L-methionine = 7-[(3S)-(3-amino-3-methoxycarbonyl)propyl]wyosine(37) in tRNA(Phe) + S-adenosyl-L-homocysteine. It carries out the reaction 7-[(3S)-(3-amino-3-methoxycarbonyl)propyl]wyosine(37) in tRNA(Phe) + S-adenosyl-L-methionine + CO2 = wybutosine(37) in tRNA(Phe) + S-adenosyl-L-homocysteine + 2 H(+). It functions in the pathway tRNA modification; wybutosine-tRNA(Phe) biosynthesis. Functionally, probable S-adenosyl-L-methionine-dependent methyltransferase that acts as a component of the wybutosine biosynthesis pathway. Wybutosine is a hyper modified guanosine with a tricyclic base found at the 3'-position adjacent to the anticodon of eukaryotic phenylalanine tRNA. May methylate the carboxyl group of leucine residues to form alpha-leucine ester residues. This Eremothecium gossypii (strain ATCC 10895 / CBS 109.51 / FGSC 9923 / NRRL Y-1056) (Yeast) protein is tRNA wybutosine-synthesizing protein 4 (PPM2).